A 566-amino-acid chain; its full sequence is Urease subunit alpha (566 aa).

Residues 128–566 (GGIDSHVHFI…LPMAQRYFLF (439 aa)) enclose the Urease domain. The Ni(2+) site is built by histidine 133, histidine 135, and lysine 216. At lysine 216 the chain carries N6-carboxylysine. Histidine 218 lines the substrate pocket. The Ni(2+) site is built by histidine 245 and histidine 271. Histidine 319 (proton donor) is an active-site residue. Ni(2+) is bound at residue aspartate 359.

This sequence belongs to the metallo-dependent hydrolases superfamily. Urease alpha subunit family. In terms of assembly, heterotrimer of UreA (gamma), UreB (beta) and UreC (alpha) subunits. Three heterotrimers associate to form the active enzyme. Requires Ni cation as cofactor. Post-translationally, carboxylation allows a single lysine to coordinate two nickel ions.

The protein localises to the cytoplasm. The enzyme catalyses urea + 2 H2O + H(+) = hydrogencarbonate + 2 NH4(+). It functions in the pathway nitrogen metabolism; urea degradation; CO(2) and NH(3) from urea (urease route): step 1/1. The polypeptide is Urease subunit alpha (Nitrosococcus oceani (strain ATCC 19707 / BCRC 17464 / JCM 30415 / NCIMB 11848 / C-107)).